We begin with the raw amino-acid sequence, 1127 residues long: MEVQVSQASLGFELTSVEKSLREWSRLSREVIAWLCPSSPNFILNFPPPPSASSVSMVQLFSSPFGYQSPSGHSEEEREGNMKSAKPQVNHSQHGESQRALSPLQSTLSSAASPSQAYETYIENGLICLKHKIRNIEKKKLKLEDYKDRLKSGEHLNPDQLEAVEKYEEVLHNLEFAKELQKTFSGLSLDLLKAQKKAQRREHMLKLEAEKKKLRTILQVQYVLQNLTQEHVQKDFKGGLNGAVYLPSKELDYLIKFSKLTCPERNESLSVEDQMEQSSLYFWDLLEGSEKAVVGTTYKHLKDLLSKLLNSGYFESIPVPKNAKEKEVPLEEEMLIQSEKKTQLSKTESVKESESLMEFAQPEIQPQEFLNRRYMTEVDYSNKQGEEQPWEADYARKPNLPKRWDMLTEPDGQEKKQESFKSWEASGKHQEVSKPAVSLEQRKQDTSKLRSTLPEEQKKQEISKSKPSPSQWKQDTPKSKAGYVQEEQKKQETPKLWPVQLQKEQDPKKQTPKSWTPSMQSEQNTTKSWTTPMCEEQDSKQPETPKSWENNVESQKHSLTSQSQISPKSWGVATASLIPNDQLLPRKLNTEPKDVPKPVHQPVGSSSTLPKDPVLRKEKLQDLMTQIQGTCNFMQESVLDFDKPSSAIPTSQPPSATPGSPVASKEQNLSSQSDFLQEPLQATSSPVTCSSNACLVTTDQASSGSETEFMTSETPEAAIPPGKQPSSLASPNPPMAKGSEQGFQSPPASSSSVTINTAPFQAMQTVFNVNAPLPPRKEQEIKESPYSPGYNQSFTTASTQTPPQCQLPSIHVEQTVHSQETAANYHPDGTIQVSNGSLAFYPAQTNVFPRPTQPFVNSRGSVRGCTRGGRLITNSYRSPGGYKGFDTYRGLPSISNGNYSQLQFQAREYSGAPYSQRDNFQQCYKRGGTSGGPRANSRAGWSDSSQVSSPERDNETFNSGDSGQGDSRSMTPVDVPVTNPAATILPVHVYPLPQQMRVAFSAARTSNLAPGTLDQPIVFDLLLNNLGETFDLQLGRFNCPVNGTYVFIFHMLKLAVNVPLYVNLMKNEEVLVSAYANDGAPDHETASNHAILQLFQGDQIWLRLHRGAIYGSSWKYSTFSGYLLYQD.

The tract at residues 67-108 (YQSPSGHSEEEREGNMKSAKPQVNHSQHGESQRALSPLQSTL) is disordered. A compositionally biased stretch (polar residues) spans 99–108 (RALSPLQSTL). Coiled coils occupy residues 129–156 (LKHK…GEHL) and 194–216 (AQKK…KLRT). Disordered regions lie at residues 382–614 (NKQG…KDPV), 642–753 (DKPS…SSSV), and 922–975 (QCYK…PVDV). 2 stretches are compositionally biased toward basic and acidic residues: residues 402 to 432 (KRWD…HQEV) and 440 to 464 (EQRK…EISK). Composition is skewed to polar residues over residues 512 to 531 (PKSW…SWTT) and 544 to 567 (TPKS…QISP). The segment covering 588 to 597 (LNTEPKDVPK) has biased composition (basic and acidic residues). Polar residues-rich tracts occupy residues 665–714 (KEQN…TSET) and 741–753 (QGFQ…SSSV). Residues serine 948 and serine 949 each carry the phosphoserine modification. Polar residues predominate over residues 956–970 (TFNSGDSGQGDSRSM). The 135-residue stretch at 993–1127 (PQQMRVAFSA…TFSGYLLYQD (135 aa)) folds into the C1q domain. Residues aspartate 1078 and glutamate 1084 each coordinate Ca(2+).

Belongs to the caprin family. Homotrimer; via C1q domain. Found in a complex with LRP6, CCNY and CDK14 during G2/M stage; CAPRIN2 functions as a scaffold for the complex by binding to CCNY via its N terminus and to CDK14 via its C terminus. Interacts with LRP5. Interacts with LRP6. In terms of tissue distribution, detected in all tissues tested with highest levels of expression in brain and spleen.

It is found in the cytoplasm. Its subcellular location is the mitochondrion. The protein localises to the cell membrane. Its function is as follows. Promotes phosphorylation of the Wnt coreceptor LRP6, leading to increased activity of the canonical Wnt signaling pathway. Facilitates constitutive LRP6 phosphorylation by CDK14/CCNY during G2/M stage of the cell cycle, which may potentiate cells for Wnt signaling. May regulate the transport and translation of mRNAs, modulating for instance the expression of proteins involved in synaptic plasticity in neurons. Involved in regulation of growth as erythroblasts shift from a highly proliferative state towards their terminal phase of differentiation. May be involved in apoptosis. The polypeptide is Caprin-2 (Homo sapiens (Human)).